Reading from the N-terminus, the 549-residue chain is MRSDQIKRGAVRAPNRCLLYSTGISPGDLDKPFIGIASSFTDLVPGHVAMRDLERYVERGIAAGGGVPFIFGAPAVCDGIAMGHSGMHYSLGSREIIADLVETVANAHMLDGLILLSNCDKVTPGMLMAAARLNIPAIVVTAGAMMTGMYDKKRRSMVRDTFEAVGQFQAGKITEKQLSELEMAACPGAGACQGMYTANTMACLTETMGMSMRGCATTLAVSAKKKRIAYESGIRVVALVKKDVKPRDILTLAAFKNAIVADMALGGSTNTVLHLPAIANEAGIELPLELFDEISKKTPQIACLEPAGDHYMEDLDNAGGIPAVLFAIQKNLAHSKTVSGFDIIEIANSAEILDEYVIRAKNPYKPEGGIAILRGNIAPRGCVVKQAAVSEKMKVFSGRARVFNSEDNAMKAILDNKIVPGDIVVIRYEGPAGGPGMREMLSPTSALHGMGLSDSVALLTDGRFSGGTRGPCIGHISPEAAADGAIVAINEGDTININIPERTLNVELTDDEIKARIGKVIKPEPKIKTGYMARYAKLVQSADTGAVLK.

Asp78 is a binding site for Mg(2+). Cys119 is a binding site for [2Fe-2S] cluster. Residues Asp120 and Lys121 each contribute to the Mg(2+) site. At Lys121 the chain carries N6-carboxylysine. Residue Cys192 participates in [2Fe-2S] cluster binding. Glu439 is a Mg(2+) binding site. Ser465 serves as the catalytic Proton acceptor.

It belongs to the IlvD/Edd family. Homodimer. [2Fe-2S] cluster is required as a cofactor. It depends on Mg(2+) as a cofactor.

It carries out the reaction (2R)-2,3-dihydroxy-3-methylbutanoate = 3-methyl-2-oxobutanoate + H2O. The enzyme catalyses (2R,3R)-2,3-dihydroxy-3-methylpentanoate = (S)-3-methyl-2-oxopentanoate + H2O. Its pathway is amino-acid biosynthesis; L-isoleucine biosynthesis; L-isoleucine from 2-oxobutanoate: step 3/4. The protein operates within amino-acid biosynthesis; L-valine biosynthesis; L-valine from pyruvate: step 3/4. Functionally, functions in the biosynthesis of branched-chain amino acids. Catalyzes the dehydration of (2R,3R)-2,3-dihydroxy-3-methylpentanoate (2,3-dihydroxy-3-methylvalerate) into 2-oxo-3-methylpentanoate (2-oxo-3-methylvalerate) and of (2R)-2,3-dihydroxy-3-methylbutanoate (2,3-dihydroxyisovalerate) into 2-oxo-3-methylbutanoate (2-oxoisovalerate), the penultimate precursor to L-isoleucine and L-valine, respectively. The polypeptide is Dihydroxy-acid dehydratase (Endomicrobium trichonymphae).